The following is a 90-amino-acid chain: Small ribosomal subunit protein bS20 (90 aa).

This sequence belongs to the bacterial ribosomal protein bS20 family.

Functionally, binds directly to 16S ribosomal RNA. This chain is Small ribosomal subunit protein bS20, found in Desulfitobacterium hafniense (strain DSM 10664 / DCB-2).